The following is a 49-amino-acid chain: L-amino-acid oxidase (49 aa).

An FAD-binding site is contributed by 43 to 44 (MS).

It belongs to the flavin monoamine oxidase family. FIG1 subfamily. Homodimer; non-covalently linked. FAD serves as cofactor. In terms of processing, N-glycosylated. In terms of tissue distribution, expressed by the venom gland.

The protein localises to the secreted. The catalysed reaction is an L-alpha-amino acid + O2 + H2O = a 2-oxocarboxylate + H2O2 + NH4(+). It catalyses the reaction L-leucine + O2 + H2O = 4-methyl-2-oxopentanoate + H2O2 + NH4(+). Functionally, catalyzes an oxidative deamination of predominantly hydrophobic and aromatic L-amino acids, thus producing hydrogen peroxide that may contribute to the diverse toxic effects of this enzyme. Shows activity on L-Leu. Exhibits diverse biological activities, such as hemorrhage, hemolysis, edema, antibacterial and antiparasitic activities, as well as regulation of platelet aggregation. Its effect on platelets is controversial, since it either induces aggregation or inhibits agonist-induced aggregation. These different effects are probably due to different experimental conditions. In addition, this protein induces apoptosis and necrosis and has inhibitory effects on rat kidney function (decrease of blood flow and glomerular filtration). In Bothrops insularis (Golden lancehead), this protein is L-amino-acid oxidase.